We begin with the raw amino-acid sequence, 252 residues long: Nuclease C1 (252 aa).

Catalysis depends on His-87, which acts as the Proton acceptor. Asn-119 contributes to the Mg(2+) binding site.

This sequence belongs to the DNA/RNA non-specific endonuclease family. Requires Mg(2+) as cofactor. The cofactor is Mn(2+).

It localises to the secreted. In terms of biological role, this enzyme has both RNase and DNase activity. The chain is Nuclease C1 (NUC1CE) from Cunninghamella echinulata var. echinulata.